Consider the following 289-residue polypeptide: Acetyl-coenzyme A carboxylase carboxyl transferase subunit beta (289 aa).

One can recognise a CoA carboxyltransferase N-terminal domain in the interval Val28–Asn289. Residues Cys32, Cys35, Cys51, and Cys54 each coordinate Zn(2+). Residues Cys32–Cys54 form a C4-type zinc finger.

It belongs to the AccD/PCCB family. As to quaternary structure, acetyl-CoA carboxylase is a heterohexamer composed of biotin carboxyl carrier protein (AccB), biotin carboxylase (AccC) and two subunits each of ACCase subunit alpha (AccA) and ACCase subunit beta (AccD). Requires Zn(2+) as cofactor.

The protein resides in the cytoplasm. The catalysed reaction is N(6)-carboxybiotinyl-L-lysyl-[protein] + acetyl-CoA = N(6)-biotinyl-L-lysyl-[protein] + malonyl-CoA. It functions in the pathway lipid metabolism; malonyl-CoA biosynthesis; malonyl-CoA from acetyl-CoA: step 1/1. Component of the acetyl coenzyme A carboxylase (ACC) complex. Biotin carboxylase (BC) catalyzes the carboxylation of biotin on its carrier protein (BCCP) and then the CO(2) group is transferred by the transcarboxylase to acetyl-CoA to form malonyl-CoA. In Bacillus cytotoxicus (strain DSM 22905 / CIP 110041 / 391-98 / NVH 391-98), this protein is Acetyl-coenzyme A carboxylase carboxyl transferase subunit beta.